A 445-amino-acid polypeptide reads, in one-letter code: Tubulin beta-1 chain (445 aa).

The short motif at 1–4 is the MREI motif element; it reads MREI. Residues Q11, E69, S138, G142, T143, G144, N204, and N226 each coordinate GTP. Residue E69 coordinates Mg(2+). The tract at residues 425–445 is disordered; sequence YQDATAEEEGEFEEEGEEELA. The segment covering 429–445 has biased composition (acidic residues); sequence TAEEEGEFEEEGEEELA. Residue E438 is modified to 5-glutamyl polyglutamate.

This sequence belongs to the tubulin family. Dimer of alpha and beta chains. A typical microtubule is a hollow water-filled tube with an outer diameter of 25 nm and an inner diameter of 15 nM. Alpha-beta heterodimers associate head-to-tail to form protofilaments running lengthwise along the microtubule wall with the beta-tubulin subunit facing the microtubule plus end conferring a structural polarity. Microtubules usually have 13 protofilaments but different protofilament numbers can be found in some organisms and specialized cells. The cofactor is Mg(2+). Post-translationally, some glutamate residues at the C-terminus are polyglycylated, resulting in polyglycine chains on the gamma-carboxyl group. Glycylation is mainly limited to tubulin incorporated into axonemes (cilia and flagella) whereas glutamylation is prevalent in neuronal cells, centrioles, axonemes, and the mitotic spindle. Both modifications can coexist on the same protein on adjacent residues, and lowering polyglycylation levels increases polyglutamylation, and reciprocally. The precise function of polyglycylation is still unclear. Some glutamate residues at the C-terminus are polyglutamylated, resulting in polyglutamate chains on the gamma-carboxyl group. Polyglutamylation plays a key role in microtubule severing by spastin (SPAST). SPAST preferentially recognizes and acts on microtubules decorated with short polyglutamate tails: severing activity by SPAST increases as the number of glutamates per tubulin rises from one to eight, but decreases beyond this glutamylation threshold.

It localises to the cytoplasm. The protein resides in the cytoskeleton. Functionally, tubulin is the major constituent of microtubules, a cylinder consisting of laterally associated linear protofilaments composed of alpha- and beta-tubulin heterodimers. Microtubules grow by the addition of GTP-tubulin dimers to the microtubule end, where a stabilizing cap forms. Below the cap, tubulin dimers are in GDP-bound state, owing to GTPase activity of alpha-tubulin. The chain is Tubulin beta-1 chain from Gadus morhua (Atlantic cod).